The primary structure comprises 71 residues: Disintegrin halysin (71 aa).

One can recognise a Disintegrin domain in the interval 1–71 (EAGEECDCGS…ISAGCPRNPF (71 aa)). Cystine bridges form between cysteine 6/cysteine 21, cysteine 8/cysteine 16, cysteine 15/cysteine 38, cysteine 29/cysteine 35, cysteine 34/cysteine 59, and cysteine 47/cysteine 66. Residues 51 to 53 (RGD) carry the Cell attachment site motif.

Belongs to the venom metalloproteinase (M12B) family. P-II subfamily. P-IIa sub-subfamily. Monomer. In terms of tissue distribution, expressed by the venom gland.

It localises to the secreted. Inhibits fibrinogen interaction with platelets. Acts by binding to alpha-IIb/beta-3 (ITGA2B/ITGB3) on the platelet surface and inhibits aggregation induced by ADP, thrombin, platelet-activating factor and collagen. This Gloydius blomhoffii (Mamushi) protein is Disintegrin halysin.